Consider the following 458-residue polypeptide: MVGSGAAGGGGGGGGGGDHARSKEAAGMMALHEALRNVCLNSDWTYSVFWTIRPRPRCRGGNGCKVGDDNGSLMLMWEDGFCRPRVAECLEDIDGEDPVRKAFSKMSIQLYNYGEGLMGKVASDKCHKWVFKEPSECEPNIANYWQSSFDALPPEWTDQFASGIQTIAVIQAGHGLLQLGSCKIIPEDLHFVLRMRHMFESLGYQSGFFLSQLFSSSRGTSPSPSSFPLKQQQPPPPQLFNWPGHAPPQLPPGASPLFPPGPAAFHPSSRPMPPFPGGGKDESHLFHLPPAAAAKQPQHMDEHHHHQQQPMAAPQQHGGEAPEGDLKWPNGLSFFTALTGRTEDAKFLFGGGGGGGADDGSKTAAAAQDAGHGGAENVEEYLSLESHSNKARRMESAQSTKFKRSFTLPARMSSSTTSTSPSVSASTAPAPPQQQQGMEYRGPHEGGVYSDLMETFLE.

Residues 1-17 (MVGSGAAGGGGGGGGGG) show a composition bias toward gly residues. Disordered regions lie at residues 1–21 (MVGS…DHAR), 220–325 (TSPS…PEGD), 354–374 (GGGA…GHGG), and 386–458 (SHSN…TFLE). Residues 220–232 (TSPSPSSFPLKQQ) show a composition bias toward low complexity. Positions 245–262 (HAPPQLPPGASPLFPPGP) are enriched in pro residues. A compositionally biased stretch (low complexity) spans 308-317 (QQPMAAPQQH). Residues 413–436 (SSSTTSTSPSVSASTAPAPPQQQQ) are compositionally biased toward low complexity.

In terms of assembly, interacts with BHLH094, BHLH089, TIFY11A/JAZ9 and TIFY11C/JAZ11. Forms a ternary complex with TIFY11A/JAZ9 and BHLH094 in the nucleus. As to expression, expressed in root tips. Expressed at high levels in the meristematic zone and at low levels in the elongation zone of the root tip.

Its subcellular location is the nucleus. The protein localises to the cytoplasm. Its function is as follows. Involved in the repression of jasmonate (JA)-induced genes. Forms a ternary complex with TIFY11A/JAZ9 and BHLH094 to negatively regulate JA-responsive genes. Involved in transcriptional regulation in the root tip. Plays a regulatory role in root cell elongation. Regulates root cell elongation during salt stress. The protein is Protein RICE SALT SENSITIVE 3 of Oryza sativa subsp. japonica (Rice).